Here is a 137-residue protein sequence, read N- to C-terminus: Glycine cleavage system H protein (137 aa).

The region spanning 36 to 118 (PAIIGITEYA…YGEGWLLKVE (83 aa)) is the Lipoyl-binding domain. Lys77 is subject to N6-lipoyllysine.

It belongs to the GcvH family. The glycine cleavage system is composed of four proteins: P, T, L and H. It depends on (R)-lipoate as a cofactor.

The glycine cleavage system catalyzes the degradation of glycine. The H protein shuttles the methylamine group of glycine from the P protein to the T protein. The polypeptide is Glycine cleavage system H protein (Bifidobacterium longum (strain NCC 2705)).